The chain runs to 208 residues: Protein-L-isoaspartate O-methyltransferase (208 aa).

Ser59 is an active-site residue.

This sequence belongs to the methyltransferase superfamily. L-isoaspartyl/D-aspartyl protein methyltransferase family.

Its subcellular location is the cytoplasm. It carries out the reaction [protein]-L-isoaspartate + S-adenosyl-L-methionine = [protein]-L-isoaspartate alpha-methyl ester + S-adenosyl-L-homocysteine. Catalyzes the methyl esterification of L-isoaspartyl residues in peptides and proteins that result from spontaneous decomposition of normal L-aspartyl and L-asparaginyl residues. It plays a role in the repair and/or degradation of damaged proteins. The chain is Protein-L-isoaspartate O-methyltransferase from Aliivibrio fischeri (strain MJ11) (Vibrio fischeri).